The sequence spans 691 residues: Homeobox protein NOBOX (691 aa).

Positions 94–103 are enriched in basic and acidic residues; it reads ELTRGQKAGE. Residues 94-233 form a disordered region; it reads ELTRGQKAGE…NSARATHNPV (140 aa). Polar residues predominate over residues 216–228; that stretch reads PTSSPGAPNSARA. The homeobox DNA-binding region spans 272 to 363; it reads RKKTRTLYRS…NRRAKWRKME (92 aa). Disordered regions lie at residues 366–385, 394–437, and 635–691; these read NGKESKDNPAAPGPASSQCS, VPME…AQRV, and QALG…SHVP. A compositionally biased stretch (pro residues) spans 395 to 405; that stretch reads PMEPKPDPFPQ. Residues 420-432 show a composition bias toward polar residues; it reads TSDQTLAPTQPSE. Positions 679–691 are enriched in basic and acidic residues; sequence EEARGDDKNSHVP.

Expressed in ovaries, testes and pancreas. Expressed within all stages of the adult female germline, from primordial follicles through to MII oocytes.

The protein localises to the nucleus. In terms of biological role, transcription factor which may play a role in oogenesis. Binds preferentially to the DNA sequences 5'-TAATTG-3', 5'-TAGTTG-3' and 5'-TAATTA-3'. In Homo sapiens (Human), this protein is Homeobox protein NOBOX (NOBOX).